A 151-amino-acid chain; its full sequence is D-aminoacyl-tRNA deacylase (151 aa).

A Gly-cisPro motif, important for rejection of L-amino acids motif is present at residues 142-143 (GP).

It belongs to the DTD family. Homodimer.

It localises to the cytoplasm. It carries out the reaction glycyl-tRNA(Ala) + H2O = tRNA(Ala) + glycine + H(+). The enzyme catalyses a D-aminoacyl-tRNA + H2O = a tRNA + a D-alpha-amino acid + H(+). In terms of biological role, an aminoacyl-tRNA editing enzyme that deacylates mischarged D-aminoacyl-tRNAs. Also deacylates mischarged glycyl-tRNA(Ala), protecting cells against glycine mischarging by AlaRS. Acts via tRNA-based rather than protein-based catalysis; rejects L-amino acids rather than detecting D-amino acids in the active site. By recycling D-aminoacyl-tRNA to D-amino acids and free tRNA molecules, this enzyme counteracts the toxicity associated with the formation of D-aminoacyl-tRNA entities in vivo and helps enforce protein L-homochirality. In Psychrobacter cryohalolentis (strain ATCC BAA-1226 / DSM 17306 / VKM B-2378 / K5), this protein is D-aminoacyl-tRNA deacylase.